Here is a 101-residue protein sequence, read N- to C-terminus: Small ribosomal subunit protein uS10 (101 aa).

It belongs to the universal ribosomal protein uS10 family. In terms of assembly, part of the 30S ribosomal subunit.

Its function is as follows. Involved in the binding of tRNA to the ribosomes. The protein is Small ribosomal subunit protein uS10 of Flavobacterium psychrophilum (strain ATCC 49511 / DSM 21280 / CIP 103535 / JIP02/86).